We begin with the raw amino-acid sequence, 285 residues long: MAHQAHPFRSVLYIPGSKERALEKAQGLAADAIIFDLEDAVAHDEKIHARALLKTTLETVDYGHRFRIVRVNGMDTEWGRADLEAFAEAKADAILIPKVSRAADLEAVAALVPDLPLWAMMETAQGMLNAAEIAAHPRLTGMVMGTNDLAKELGSRYRPDRLAMQAGLGLCLLAARAHGLTIVDGVYNAFKDEEGLRAECEQGRDMGFDGKTLIHPAQLEIANAVFSPSPAEIELANRQIAAFEEAERHGQGVAVVDGKIVENLHIVTARQTLAKAEAIAAFRAS.

The substrate site is built by Arg-70 and Glu-122. Residues Glu-122 and Asp-148 each contribute to the Mg(2+) site.

Belongs to the HpcH/HpaI aldolase family. As to quaternary structure, homodimer or homotrimer. Mg(2+) is required as a cofactor.

It catalyses the reaction (S)-malyl-CoA + H2O = (S)-malate + CoA + H(+). Functionally, catalyzes the hydrolysis of (3S)-malyl-CoA to (3S)-malate and free CoA. Inactive towards beta-methylmalyl-CoA and other CoA esters. In Cereibacter sphaeroides (strain ATCC 17029 / ATH 2.4.9) (Rhodobacter sphaeroides), this protein is (3S)-malyl-CoA thioesterase.